A 413-amino-acid chain; its full sequence is DNA polymerase IV 1 (413 aa).

Positions 7 to 188 (IFHVDMNSFY…LPIEEMYGIG (182 aa)) constitute a UmuC domain. Residues D11 and D107 each contribute to the Mg(2+) site. E108 is an active-site residue.

It belongs to the DNA polymerase type-Y family. Monomer. Mg(2+) serves as cofactor.

Its subcellular location is the cytoplasm. The catalysed reaction is DNA(n) + a 2'-deoxyribonucleoside 5'-triphosphate = DNA(n+1) + diphosphate. Its function is as follows. Poorly processive, error-prone DNA polymerase involved in untargeted mutagenesis. Copies undamaged DNA at stalled replication forks, which arise in vivo from mismatched or misaligned primer ends. These misaligned primers can be extended by PolIV. Exhibits no 3'-5' exonuclease (proofreading) activity. May be involved in translesional synthesis, in conjunction with the beta clamp from PolIII. The sequence is that of DNA polymerase IV 1 (dinB1) from Halalkalibacterium halodurans (strain ATCC BAA-125 / DSM 18197 / FERM 7344 / JCM 9153 / C-125) (Bacillus halodurans).